The chain runs to 395 residues: Acetate kinase (395 aa).

Mg(2+) is bound at residue Asn8. An ATP-binding site is contributed by Lys15. Arg94 provides a ligand contact to substrate. The active-site Proton donor/acceptor is Asp151. ATP-binding positions include 210–214 (HLGNG), 284–286 (DMR), and 329–333 (GIGEN). A Mg(2+)-binding site is contributed by Glu382.

The protein belongs to the acetokinase family. As to quaternary structure, homodimer. Mg(2+) serves as cofactor. Requires Mn(2+) as cofactor.

Its subcellular location is the cytoplasm. It catalyses the reaction acetate + ATP = acetyl phosphate + ADP. The protein operates within metabolic intermediate biosynthesis; acetyl-CoA biosynthesis; acetyl-CoA from acetate: step 1/2. In terms of biological role, catalyzes the formation of acetyl phosphate from acetate and ATP. Can also catalyze the reverse reaction. This is Acetate kinase from Protochlamydia amoebophila (strain UWE25).